The sequence spans 314 residues: Trimethylamine N-oxide-binding protein (314 aa).

Residues 1-24 (MKKIVSLMSALVISVVSFAGISNA) form the signal peptide. Trimethylamine N-oxide-binding residues include Trp38, Trp85, Glu114, Trp164, and Trp212.

The complex is probably composed of two ATP-binding proteins (TmoW), two transmembrane proteins (TmoV) and a solute-binding protein (TmoX).

It localises to the periplasm. Part of the ABC transporter complex TmoXWV involved in trimethylamine N-oxide (TMAO) import. Possesses a high binding affinity toward TMAO, but presents little binding affinity toward betaine, carnitine, trimethylamine (TMA) or dimethylamine (DMA). The chain is Trimethylamine N-oxide-binding protein from Pelagibacter ubique (strain HTCC1062).